We begin with the raw amino-acid sequence, 347 residues long: MNPMTFSLIMMTMVSGTFLVMMSSHWFLIWVGFEMNMLAIIPLLTKQHNPRSTEAATKYFLTQATASMLLMMAAIINLLYSGHWSVQKLINPMASVTMTMALAMKLGLAPFHFWVPEVTQGIPLSSGLILLTWQKLAPLSIMYMISPLTNLNILMIMALLSIAIGGWGGLNQTQLRKIMAYSSIAHMGWMMSVLMYNPNMMLLNLYLYIPMTITTFSLLMINSTTTTTSLSYTWNKLPLITMIILITMLSLGGLPPLTGFLPKWLIIQELVKNNNIILSTVMALLALLNLYFYTRITYTTSLTLFPTMNNTKITWQFKYPKQMLYLPLMIIISTLILPVSPMTAILE.

Helical transmembrane passes span 3–23, 59–79, 89–109, 150–170, 178–198, 201–221, 237–257, 276–296, and 326–346; these read PMTF…VMMS, YFLT…INLL, LINP…LGLA, NLNI…WGGL, IMAY…MYNP, MLLN…LLMI, LPLI…LPPL, IILS…YTRI, and LPLM…TAIL.

Belongs to the complex I subunit 2 family. As to quaternary structure, core subunit of respiratory chain NADH dehydrogenase (Complex I) which is composed of 45 different subunits. Interacts with TMEM242.

The protein localises to the mitochondrion inner membrane. The enzyme catalyses a ubiquinone + NADH + 5 H(+)(in) = a ubiquinol + NAD(+) + 4 H(+)(out). Core subunit of the mitochondrial membrane respiratory chain NADH dehydrogenase (Complex I) which catalyzes electron transfer from NADH through the respiratory chain, using ubiquinone as an electron acceptor. Essential for the catalytic activity and assembly of complex I. The sequence is that of NADH-ubiquinone oxidoreductase chain 2 from Nyctophilus arnhemensis (Northern long-eared bat).